We begin with the raw amino-acid sequence, 179 residues long: Orotate phosphoribosyltransferase (179 aa).

5-phospho-alpha-D-ribose 1-diphosphate contacts are provided by residues R24, R89, K90, K93, and 115–123 (EDVITTGGA). Positions 119 and 147 each coordinate orotate.

Belongs to the purine/pyrimidine phosphoribosyltransferase family. PyrE subfamily. Homodimer. The cofactor is Mg(2+).

It catalyses the reaction orotidine 5'-phosphate + diphosphate = orotate + 5-phospho-alpha-D-ribose 1-diphosphate. It functions in the pathway pyrimidine metabolism; UMP biosynthesis via de novo pathway; UMP from orotate: step 1/2. Catalyzes the transfer of a ribosyl phosphate group from 5-phosphoribose 1-diphosphate to orotate, leading to the formation of orotidine monophosphate (OMP). The sequence is that of Orotate phosphoribosyltransferase from Nocardioides sp. (strain ATCC BAA-499 / JS614).